The chain runs to 109 residues: Putative double-stranded DNA mimic protein YciU (109 aa).

The protein belongs to the putative dsDNA mimic protein family.

Its function is as follows. May act as a double-stranded DNA (dsDNA) mimic. Probably regulates the activity of a dsDNA-binding protein. The chain is Putative double-stranded DNA mimic protein YciU from Escherichia coli O45:K1 (strain S88 / ExPEC).